A 320-amino-acid chain; its full sequence is Cytochrome f (320 aa).

Residues 1 to 35 (MQTRNAFSWIKKEITRSISVLLMIYIITRAPISNA) form the signal peptide. Tyr36, Cys56, Cys59, and His60 together coordinate heme. The chain crosses the membrane as a helical span at residues 286 to 305 (VQGLLLFLASIILAQILLVL).

It belongs to the cytochrome f family. As to quaternary structure, the 4 large subunits of the cytochrome b6-f complex are cytochrome b6, subunit IV (17 kDa polypeptide, petD), cytochrome f and the Rieske protein, while the 4 small subunits are PetG, PetL, PetM and PetN. The complex functions as a dimer. Requires heme as cofactor.

The protein localises to the plastid. It is found in the chloroplast thylakoid membrane. Its function is as follows. Component of the cytochrome b6-f complex, which mediates electron transfer between photosystem II (PSII) and photosystem I (PSI), cyclic electron flow around PSI, and state transitions. This Pisum sativum (Garden pea) protein is Cytochrome f (petA).